Reading from the N-terminus, the 712-residue chain is Glycine--tRNA ligase beta subunit (712 aa).

This sequence belongs to the class-II aminoacyl-tRNA synthetase family. In terms of assembly, tetramer of two alpha and two beta subunits.

It is found in the cytoplasm. It carries out the reaction tRNA(Gly) + glycine + ATP = glycyl-tRNA(Gly) + AMP + diphosphate. The protein is Glycine--tRNA ligase beta subunit of Dechloromonas aromatica (strain RCB).